The sequence spans 382 residues: Galactokinase (382 aa).

Position 34-37 (E34–D37) interacts with substrate. G124 to S130 is an ATP binding site. Mg(2+) contacts are provided by S130 and E162. Residue D174 is the Proton acceptor of the active site. Y223 lines the substrate pocket.

Belongs to the GHMP kinase family. GalK subfamily.

The protein localises to the cytoplasm. It carries out the reaction alpha-D-galactose + ATP = alpha-D-galactose 1-phosphate + ADP + H(+). It participates in carbohydrate metabolism; galactose metabolism. In terms of biological role, catalyzes the transfer of the gamma-phosphate of ATP to D-galactose to form alpha-D-galactose-1-phosphate (Gal-1-P). The polypeptide is Galactokinase (Shigella flexneri serotype 5b (strain 8401)).